A 315-amino-acid chain; its full sequence is tRNA uridine(34) hydroxylase (315 aa).

A Rhodanese domain is found at 145–235 (MKNDFILVDM…GIIEYVNFIK (91 aa)). Residue C199 is the Cysteine persulfide intermediate of the active site.

The protein belongs to the TrhO family.

The catalysed reaction is uridine(34) in tRNA + AH2 + O2 = 5-hydroxyuridine(34) in tRNA + A + H2O. Functionally, catalyzes oxygen-dependent 5-hydroxyuridine (ho5U) modification at position 34 in tRNAs. This Wigglesworthia glossinidia brevipalpis protein is tRNA uridine(34) hydroxylase.